Reading from the N-terminus, the 767-residue chain is Probable NADP-dependent malic enzyme (767 aa).

The interval 1–430 is malic enzyme; the sequence is MDEMNKINYT…QLGSRLNPTA (430 aa). Tyr42 serves as the catalytic Proton donor. Lys97 (proton acceptor) is an active-site residue. Positions 139, 140, and 165 each coordinate a divalent metal cation. NADP(+) contacts are provided by residues 198 to 201, Asn290, and Asn322; that span reads AGAA. The interval 431-767 is phosphate acetyltransferase; it reads NYMNFLAEKI…FACVEAIKEV (337 aa).

The protein in the N-terminal section; belongs to the malic enzymes family. This sequence in the C-terminal section; belongs to the phosphate acetyltransferase and butyryltransferase family. Mg(2+) serves as cofactor. It depends on Mn(2+) as a cofactor.

The enzyme catalyses (S)-malate + NADP(+) = pyruvate + CO2 + NADPH. It catalyses the reaction oxaloacetate + H(+) = pyruvate + CO2. This chain is Probable NADP-dependent malic enzyme, found in Rickettsia prowazekii (strain Madrid E).